The primary structure comprises 287 residues: tRNA pseudouridine synthase B (287 aa).

The active-site Nucleophile is the Asp-38.

Belongs to the pseudouridine synthase TruB family. Type 1 subfamily.

The enzyme catalyses uridine(55) in tRNA = pseudouridine(55) in tRNA. In terms of biological role, responsible for synthesis of pseudouridine from uracil-55 in the psi GC loop of transfer RNAs. The chain is tRNA pseudouridine synthase B from Fusobacterium nucleatum subsp. nucleatum (strain ATCC 25586 / DSM 15643 / BCRC 10681 / CIP 101130 / JCM 8532 / KCTC 2640 / LMG 13131 / VPI 4355).